The primary structure comprises 897 residues: DNA polymerase I (897 aa).

A 5'-3' exonuclease domain is found at 1–317 (MEQPVIKEGT…ILDNTPALDN (317 aa)). One can recognise a 3'-5' exonuclease domain in the interval 318 to 494 (APKKSRMIVL…RLCEYFEKGG (177 aa)). The interval 498 to 896 (DLLTLARDIE…FIAKRWNELK (399 aa)) is polymerase.

Belongs to the DNA polymerase type-A family. Single-chain monomer with multiple functions.

The enzyme catalyses DNA(n) + a 2'-deoxyribonucleoside 5'-triphosphate = DNA(n+1) + diphosphate. In terms of biological role, in addition to polymerase activity, this DNA polymerase exhibits 3'-5' and 5'-3' exonuclease activity. The polypeptide is DNA polymerase I (polA) (Helicobacter pylori (strain J99 / ATCC 700824) (Campylobacter pylori J99)).